The chain runs to 538 residues: Efflux pump radE (538 aa).

Composition is skewed to basic and acidic residues over residues methionine 1 to proline 12, glutamate 20 to histidine 35, and aspartate 65 to asparagine 74. Disordered regions lie at residues methionine 1–histidine 35 and aspartate 65–tryptophan 90. 12 helical membrane-spanning segments follow: residues alanine 100–isoleucine 120, leucine 134–alanine 154, valine 163–serine 183, phenylalanine 194–leucine 214, serine 225–leucine 245, tryptophan 253–leucine 273, proline 327–isoleucine 347, glutamate 362–valine 382, isoleucine 409–threonine 429, tryptophan 436–serine 456, isoleucine 482–tryptophan 502, and serine 505–glycine 525.

It belongs to the major facilitator superfamily.

The protein localises to the cell membrane. Efflux pump that might be required for efficient secretion of radicicol or other secondary metabolies produced by the radicicol gene cluster. In Floropilus chiversii (Chaetomium chiversii), this protein is Efflux pump radE.